The chain runs to 197 residues: ATP-dependent Clp protease proteolytic subunit 2 (197 aa).

Serine 96 serves as the catalytic Nucleophile. Histidine 121 is a catalytic residue.

The protein belongs to the peptidase S14 family. In terms of assembly, fourteen ClpP subunits assemble into 2 heptameric rings which stack back to back to give a disk-like structure with a central cavity, resembling the structure of eukaryotic proteasomes.

The protein localises to the cytoplasm. It carries out the reaction Hydrolysis of proteins to small peptides in the presence of ATP and magnesium. alpha-casein is the usual test substrate. In the absence of ATP, only oligopeptides shorter than five residues are hydrolyzed (such as succinyl-Leu-Tyr-|-NHMec, and Leu-Tyr-Leu-|-Tyr-Trp, in which cleavage of the -Tyr-|-Leu- and -Tyr-|-Trp bonds also occurs).. Cleaves peptides in various proteins in a process that requires ATP hydrolysis. Has a chymotrypsin-like activity. Plays a major role in the degradation of misfolded proteins. The chain is ATP-dependent Clp protease proteolytic subunit 2 from Synechococcus sp. (strain CC9605).